Here is a 375-residue protein sequence, read N- to C-terminus: B3 domain-containing protein REM-like 2 (375 aa).

DNA-binding regions (TF-B3) lie at residues 51-147, 131-226, and 277-375; these read SFVA…KRLY, FVTV…YGTN, and RLVI…KSGK.

It is found in the nucleus. This is B3 domain-containing protein REM-like 2 from Arabidopsis thaliana (Mouse-ear cress).